The sequence spans 447 residues: Beta-glucuronosyltransferase GlcAT14A (447 aa).

At 1–33 the chain is on the cytoplasmic side; it reads MKKLRSYYSNVRHHQNHHHHHHHHSNIVSSERK. The chain crosses the membrane as a helical; Signal-anchor for type II membrane protein span at residues 34 to 54; it reads WIFFPLLIGSIFALFLLFLTT. The Lumenal portion of the chain corresponds to 55 to 447; sequence TLTSPTGGVR…TENFRSKQCK (393 aa). N-linked (GlcNAc...) asparagine glycosylation is found at N151, N200, N329, and N405.

The protein belongs to the glycosyltransferase 14 family.

It localises to the golgi apparatus membrane. Functionally, beta-glucuronosyltransferase involved in the biosynthesis of type II arabinogalactan (AG). Modifies both the beta-1,6-linked galactan and beta-1,3-linked galactan present in type II AG. Transfers glucuronate to beta-1,6-galactooligosaccharides with degrees of polymerization ranging from 3 to 11. Transfers glucuronate to beta-1,3-galactooligosaccharides with degrees of polymerization ranging from 5 to 7. The addition of glucuronate at the O6 position may terminate galactose chain extension. Required for cell elongation during seedling growth. The protein is Beta-glucuronosyltransferase GlcAT14A of Arabidopsis thaliana (Mouse-ear cress).